Consider the following 316-residue polypeptide: Endochitinase WIN8 (316 aa).

A signal peptide spans 1 to 23 (MRFWALTVLSLLLSLLLGVSSDT). Residues 24–64 (AQCGSQAGNATCPNDLCCSSGGYCGLTVAYCCAGCVSQCRN) enclose the Chitin-binding type-1 domain. Cystine bridges form between Cys-26–Cys-41, Cys-35–Cys-47, Cys-40–Cys-54, Cys-58–Cys-62, Cys-84–Cys-146, Cys-158–Cys-168, and Cys-266–Cys-298. The active-site Proton donor is Glu-128.

Belongs to the glycosyl hydrolase 19 family. Chitinase class I subfamily.

The catalysed reaction is Random endo-hydrolysis of N-acetyl-beta-D-glucosaminide (1-&gt;4)-beta-linkages in chitin and chitodextrins.. Its function is as follows. Defense against chitin-containing fungal pathogens. This is Endochitinase WIN8 (WIN8) from Populus trichocarpa (Western balsam poplar).